We begin with the raw amino-acid sequence, 164 residues long: 3-isopropylmalate dehydratase small subunit (164 aa).

It belongs to the LeuD family. LeuD type 2 subfamily. In terms of assembly, heterodimer of LeuC and LeuD.

It carries out the reaction (2R,3S)-3-isopropylmalate = (2S)-2-isopropylmalate. The protein operates within amino-acid biosynthesis; L-leucine biosynthesis; L-leucine from 3-methyl-2-oxobutanoate: step 2/4. In terms of biological role, catalyzes the isomerization between 2-isopropylmalate and 3-isopropylmalate, via the formation of 2-isopropylmaleate. This chain is 3-isopropylmalate dehydratase small subunit, found in Syntrophus aciditrophicus (strain SB).